Here is a 267-residue protein sequence, read N- to C-terminus: MESSILERCFSQSKKEGRIALMPFIMAGDPDVNTSAEILIMLEKKGADIIELGIPYSDPLADGPIIQKAASRALNSGTSPKSVLEMLSTLKTKLSVPIILFTYSNPLLNYGMEEFCIDASKAGAAGLVVPDLPLEETEKLSSIALSKNLDLVLLVAPTTPKERMRKISQRSNGFTYLVSVTGVTGERSALENRVQLLINELRGFSSTPVAVGFGISDTKHVIQVKRWGADGAIIGSALVKRISNATTGQEAEEAGKFCSELYKATSL.

Catalysis depends on proton acceptor residues Glu-51 and Asp-62.

It belongs to the TrpA family. Tetramer of two alpha and two beta chains.

The catalysed reaction is (1S,2R)-1-C-(indol-3-yl)glycerol 3-phosphate + L-serine = D-glyceraldehyde 3-phosphate + L-tryptophan + H2O. The protein operates within amino-acid biosynthesis; L-tryptophan biosynthesis; L-tryptophan from chorismate: step 5/5. Its function is as follows. The alpha subunit is responsible for the aldol cleavage of indoleglycerol phosphate to indole and glyceraldehyde 3-phosphate. The polypeptide is Tryptophan synthase alpha chain (Prochlorococcus marinus (strain SARG / CCMP1375 / SS120)).